A 274-amino-acid polypeptide reads, in one-letter code: Thiamine kinase (274 aa).

Belongs to the thiamine kinase family.

It catalyses the reaction thiamine + ATP = thiamine phosphate + ADP + H(+). It functions in the pathway cofactor biosynthesis; thiamine diphosphate biosynthesis; thiamine phosphate from thiamine: step 1/1. Functionally, catalyzes the ATP-dependent phosphorylation of thiamine to thiamine phosphate. Is involved in thiamine salvage. This is Thiamine kinase from Escherichia coli (strain K12 / MC4100 / BW2952).